A 92-amino-acid polypeptide reads, in one-letter code: UPF0235 protein PYRAB05010 (92 aa).

This sequence belongs to the UPF0235 family.

This chain is UPF0235 protein PYRAB05010, found in Pyrococcus abyssi (strain GE5 / Orsay).